The primary structure comprises 239 residues: Phosphoribosylaminoimidazole-succinocarboxamide synthase (239 aa).

It belongs to the SAICAR synthetase family.

It carries out the reaction 5-amino-1-(5-phospho-D-ribosyl)imidazole-4-carboxylate + L-aspartate + ATP = (2S)-2-[5-amino-1-(5-phospho-beta-D-ribosyl)imidazole-4-carboxamido]succinate + ADP + phosphate + 2 H(+). The protein operates within purine metabolism; IMP biosynthesis via de novo pathway; 5-amino-1-(5-phospho-D-ribosyl)imidazole-4-carboxamide from 5-amino-1-(5-phospho-D-ribosyl)imidazole-4-carboxylate: step 1/2. The chain is Phosphoribosylaminoimidazole-succinocarboxamide synthase from Dichelobacter nodosus (strain VCS1703A).